The sequence spans 163 residues: MSDPSFDVVSEISRPELTNAVTQALGEIKNRFDFKGSKSDIQLEDEQLVLVSDNEAKLESVIDVLVSKMAKRGLGLKNFDFKSKVEPATGGTVRMKVKIRKGMEKEQTKEVTRIIKESKLKVNVTIMGESVRVTGKKKDDLQEVIHLLKNADFPFDVQFTNYK.

It belongs to the YajQ family.

Nucleotide-binding protein. This chain is Nucleotide-binding protein LBJ_2391, found in Leptospira borgpetersenii serovar Hardjo-bovis (strain JB197).